A 293-amino-acid polypeptide reads, in one-letter code: Protease HtpX (293 aa).

2 helical membrane-spanning segments follow: residues 4–24 (IALF…VLSL) and 34–54 (GLMI…LLMS). H139 contributes to the Zn(2+) binding site. E140 is a catalytic residue. Position 143 (H143) interacts with Zn(2+). 2 helical membrane-spanning segments follow: residues 158 to 178 (IVNT…AGFL) and 193 to 213 (MVYF…ASII). Residue E222 participates in Zn(2+) binding.

This sequence belongs to the peptidase M48B family. The cofactor is Zn(2+).

Its subcellular location is the cell inner membrane. This is Protease HtpX from Yersinia enterocolitica serotype O:8 / biotype 1B (strain NCTC 13174 / 8081).